The primary structure comprises 225 residues: Ribosomal RNA small subunit methyltransferase G (225 aa).

Residues G62, 113-114 (AE), and K130 each bind S-adenosyl-L-methionine.

The protein belongs to the methyltransferase superfamily. RNA methyltransferase RsmG family.

The protein localises to the cytoplasm. Functionally, specifically methylates the N7 position of a guanine in 16S rRNA. In Petrotoga mobilis (strain DSM 10674 / SJ95), this protein is Ribosomal RNA small subunit methyltransferase G.